Consider the following 387-residue polypeptide: Small ribosomal subunit protein uS5m (387 aa).

A mitochondrion-targeting transit peptide spans 1-22 (MLRSFSHFLQIGSRRQPTYFRC). The tract at residues 33-87 (FKNDPKKELNSNLNEKSVEESSKNETKEQFNSSSIPRESESEGKTASNTSPLSPK) is disordered. Over residues 48–60 (KSVEESSKNETKE) the composition is skewed to basic and acidic residues. Position 85 is a phosphoserine (S85). In terms of domain architecture, S5 DRBM spans 225 to 288 (LMFVPLVRRR…GRAVKNMVYI (64 aa)).

This sequence belongs to the universal ribosomal protein uS5 family. Component of the mitochondrial small ribosomal subunit (mt-SSU). Mature yeast 74S mitochondrial ribosomes consist of a small (37S) and a large (54S) subunit. The 37S small subunit contains a 15S ribosomal RNA (15S mt-rRNA) and at least 32 different proteins. The 54S large subunit contains a 21S rRNA (21S mt-rRNA) and at least 45 different proteins. uS3m, uS4m and uS5m form the narrow entry site of the mRNA channel.

Its subcellular location is the mitochondrion. Component of the mitochondrial ribosome (mitoribosome), a dedicated translation machinery responsible for the synthesis of mitochondrial genome-encoded proteins, including at least some of the essential transmembrane subunits of the mitochondrial respiratory chain. The mitoribosomes are attached to the mitochondrial inner membrane and translation products are cotranslationally integrated into the membrane. In Schizosaccharomyces pombe (strain 972 / ATCC 24843) (Fission yeast), this protein is Small ribosomal subunit protein uS5m (mrp5).